The sequence spans 318 residues: Glutathione synthetase (318 aa).

Residues 129–314 form the ATP-grasp domain; sequence KLAITEFPDL…VPEMFAVALE (186 aa). 155–211 provides a ligand contact to ATP; that stretch reads HAAQGDVIVKPLDDMGGTGIFRLQRSEPNLNAILETLTDNGTRTIMAQRYIPEIVKG. Residues Glu285 and Asn287 each coordinate Mg(2+).

It belongs to the prokaryotic GSH synthase family. The cofactor is Mg(2+). It depends on Mn(2+) as a cofactor.

It carries out the reaction gamma-L-glutamyl-L-cysteine + glycine + ATP = glutathione + ADP + phosphate + H(+). Its pathway is sulfur metabolism; glutathione biosynthesis; glutathione from L-cysteine and L-glutamate: step 2/2. In Bordetella pertussis (strain Tohama I / ATCC BAA-589 / NCTC 13251), this protein is Glutathione synthetase.